The following is a 133-amino-acid chain: DNA-directed RNA polymerases I and III subunit RPAC2 (133 aa).

At methionine 1 the chain carries N-acetylmethionine. Positions 1-22 (MEEDQELERKMSGVKTSMAEGE) are disordered.

It belongs to the archaeal Rpo11/eukaryotic RPB11/RPC19 RNA polymerase subunit family. As to quaternary structure, component of the RNA polymerase I and RNA polymerase III complexes consisting of at least 13 and 17 subunits, respectively. The transcriptionally active RNA polymerase III complex consists of a ten-subunit horseshoe-shaped catalytic core composed of POLR3A/RPC1, POLR3B/RPC2, POLR1C/RPAC1, POLR1D/RPAC2, POLR3K/RPC10, POLR2E/RPABC1, POLR2F/RPABC2, POLR2H/RPABC3, POLR2K/RPABC4 and POLR2L/RPABC5; a mobile stalk composed of two subunits POLR3H/RPC8 and CRCP/RPC9, protruding from the core and functioning primarily in transcription initiation; and additional subunits homologous to general transcription factors of the RNA polymerase II machinery, POLR3C/RPC3-POLR3F/RPC6-POLR3G/RPC7 heterotrimer required for transcription initiation and POLR3D/RPC4-POLR3E/RPC5 heterodimer involved in both transcription initiation and termination.

The protein resides in the nucleus. Its function is as follows. DNA-dependent RNA polymerase catalyzes the transcription of DNA into RNA using the four ribonucleoside triphosphates as substrates. Common component of RNA polymerases I and III which synthesize ribosomal RNA precursor pre-rRNA and short non-coding RNAs including 5S rRNA, snRNAs, tRNAs and miRNAs, respectively. The protein is DNA-directed RNA polymerases I and III subunit RPAC2 (POLR1D) of Bos taurus (Bovine).